Reading from the N-terminus, the 68-residue chain is U-actitoxin-Avt1 (68 aa).

An N-terminal signal peptide occupies residues 1 to 22; that stretch reads MNSKAIISVFLIMLVVVSCTQA. Residues 23-40 constitute a propeptide that is removed on maturation; it reads TYETEDDDEPGPRHSEKR. Positions 24–50 are disordered; that stretch reads YETEDDDEPGPRHSEKRSCARGCGGDS. Residues 32 to 41 show a composition bias toward basic and acidic residues; it reads PGPRHSEKRS. Intrachain disulfides connect C42–C54, C46–C59, and C52–C66.

Stable protein with probable toxin activity. Does not show activity on all channels tested. Shows no hemolytic activity on rat erythrocytes. This Aulactinia veratra (Green snakelock anemone) protein is U-actitoxin-Avt1.